Reading from the N-terminus, the 182-residue chain is Probable peptidyl-prolyl cis-trans isomerase A (182 aa).

The PPIase cyclophilin-type domain maps to Ala-13–Ile-181.

This sequence belongs to the cyclophilin-type PPIase family.

It is found in the cytoplasm. It catalyses the reaction [protein]-peptidylproline (omega=180) = [protein]-peptidylproline (omega=0). Functionally, PPIases accelerate the folding of proteins. It catalyzes the cis-trans isomerization of proline imidic peptide bonds in oligopeptides. This chain is Probable peptidyl-prolyl cis-trans isomerase A (ppiA), found in Mycobacterium bovis (strain ATCC BAA-935 / AF2122/97).